We begin with the raw amino-acid sequence, 321 residues long: MDRGRCANMLKSLQRTLAKCQKSPSTNHWQCFKRNFTSIRATKYPGRSNSTFHYWPWFAASTLLATSLYYRDRPVQNDDKTDAFPSHTESIQVDSSVSDFPLTITALNFPVSTTFKLLGYGQRHVTFLRFKVYALGLYLAENDENLVSDTLNETYLHKYFLDVDDSKTPKENLARLLKRDDSKSVMMIDDLLDSGMRMLAKITPVRNTDFKHLKEGLVKTISKHPDVANNKDTLAKGLSELNDAFSRKGSVRKNDDLIIELLANGALQFSYHDSKNNEFEVMGVVNNQLVGKFLFSQYLCGEKSPSPQAKKTAIDKLITLL.

A mitochondrion-targeting transit peptide spans 1-72 (MDRGRCANML…LLATSLYYRD (72 aa)).

It belongs to the AIM18/AIM46 family.

The protein localises to the mitochondrion. In Saccharomyces cerevisiae (strain RM11-1a) (Baker's yeast), this protein is Altered inheritance of mitochondria protein 18, mitochondrial (AIM18).